A 126-amino-acid chain; its full sequence is Aspartate 1-decarboxylase (126 aa).

Ser25 serves as the catalytic Schiff-base intermediate with substrate; via pyruvic acid. Position 25 is a pyruvic acid (Ser) (Ser25). Thr57 contributes to the substrate binding site. Tyr58 serves as the catalytic Proton donor. 73–75 (GSA) lines the substrate pocket.

The protein belongs to the PanD family. In terms of assembly, heterooctamer of four alpha and four beta subunits. The cofactor is pyruvate. In terms of processing, is synthesized initially as an inactive proenzyme, which is activated by self-cleavage at a specific serine bond to produce a beta-subunit with a hydroxyl group at its C-terminus and an alpha-subunit with a pyruvoyl group at its N-terminus.

It localises to the cytoplasm. It carries out the reaction L-aspartate + H(+) = beta-alanine + CO2. It functions in the pathway cofactor biosynthesis; (R)-pantothenate biosynthesis; beta-alanine from L-aspartate: step 1/1. In terms of biological role, catalyzes the pyruvoyl-dependent decarboxylation of aspartate to produce beta-alanine. In Acidovorax ebreus (strain TPSY) (Diaphorobacter sp. (strain TPSY)), this protein is Aspartate 1-decarboxylase.